Here is a 188-residue protein sequence, read N- to C-terminus: Peptidyl-tRNA hydrolase (188 aa).

Tyr14 contributes to the tRNA binding site. The Proton acceptor role is filled by His19. TRNA is bound by residues Tyr64, Asn66, and Asn112.

The protein belongs to the PTH family. As to quaternary structure, monomer.

The protein localises to the cytoplasm. It carries out the reaction an N-acyl-L-alpha-aminoacyl-tRNA + H2O = an N-acyl-L-amino acid + a tRNA + H(+). Its function is as follows. Hydrolyzes ribosome-free peptidyl-tRNAs (with 1 or more amino acids incorporated), which drop off the ribosome during protein synthesis, or as a result of ribosome stalling. Functionally, catalyzes the release of premature peptidyl moieties from peptidyl-tRNA molecules trapped in stalled 50S ribosomal subunits, and thus maintains levels of free tRNAs and 50S ribosomes. The polypeptide is Peptidyl-tRNA hydrolase (Clostridium perfringens (strain SM101 / Type A)).